Here is a 289-residue protein sequence, read N- to C-terminus: Nucleotide-binding protein COPRO5265_0725 (289 aa).

9–16 serves as a coordination point for ATP; sequence GLSGAGKS. 59–62 is a GTP binding site; it reads DSRS.

It belongs to the RapZ-like family.

Its function is as follows. Displays ATPase and GTPase activities. In Coprothermobacter proteolyticus (strain ATCC 35245 / DSM 5265 / OCM 4 / BT), this protein is Nucleotide-binding protein COPRO5265_0725.